A 217-amino-acid polypeptide reads, in one-letter code: Glycerol-3-phosphate acyltransferase (217 aa).

5 helical membrane passes run 1 to 21 (MAWAISGLLVILGYLLGSIPT), 54 to 74 (TAAIAVLIIDMLKAMVAVGGV), 84 to 104 (AIVPLDWKPWLIVTVASAAIL), 126 to 146 (VLLVLNPLVALGALASFLFML), and 165 to 185 (LLMLVLHQPLAYILFAILAGI).

It belongs to the PlsY family. In terms of assembly, probably interacts with PlsX.

It localises to the cell inner membrane. The catalysed reaction is an acyl phosphate + sn-glycerol 3-phosphate = a 1-acyl-sn-glycero-3-phosphate + phosphate. It participates in lipid metabolism; phospholipid metabolism. In terms of biological role, catalyzes the transfer of an acyl group from acyl-phosphate (acyl-PO(4)) to glycerol-3-phosphate (G3P) to form lysophosphatidic acid (LPA). This enzyme utilizes acyl-phosphate as fatty acyl donor, but not acyl-CoA or acyl-ACP. The polypeptide is Glycerol-3-phosphate acyltransferase (Rippkaea orientalis (strain PCC 8801 / RF-1) (Cyanothece sp. (strain PCC 8801))).